The following is a 178-amino-acid chain: Peptide deformylase (178 aa).

Residues C102 and H144 each contribute to the Fe cation site. E145 is an active-site residue. H148 lines the Fe cation pocket.

It belongs to the polypeptide deformylase family. Fe(2+) serves as cofactor.

The enzyme catalyses N-terminal N-formyl-L-methionyl-[peptide] + H2O = N-terminal L-methionyl-[peptide] + formate. Removes the formyl group from the N-terminal Met of newly synthesized proteins. Requires at least a dipeptide for an efficient rate of reaction. N-terminal L-methionine is a prerequisite for activity but the enzyme has broad specificity at other positions. In Leptospira interrogans serogroup Icterohaemorrhagiae serovar copenhageni (strain Fiocruz L1-130), this protein is Peptide deformylase.